Here is a 118-residue protein sequence, read N- to C-terminus: Elicitin (118 aa).

Residues 1-20 (MNFRALFAATVAALVGSTSA) form the signal peptide. Intrachain disulfides connect Cys-23/Cys-91, Cys-47/Cys-76, and Cys-71/Cys-115.

This sequence belongs to the elicitin family.

It is found in the secreted. Its function is as follows. Induces local and distal defense responses (incompatible hypersensitive reaction) in plants from the solanaceae and cruciferae families. Elicits leaf necrosis and causes the accumulation of pathogenesis-related proteins. Might interact with the lipidic molecules of the plasma membrane. The protein is Elicitin (PARA1) of Phytophthora nicotianae (Potato buckeye rot agent).